We begin with the raw amino-acid sequence, 265 residues long: Methyl-coenzyme M reductase II subunit gamma (265 aa).

Arg-123 lines the coenzyme M pocket.

It belongs to the methyl-coenzyme M reductase gamma subunit family. In terms of assembly, MCR is a hexamer of two alpha, two beta, and two gamma chains, forming a dimer of heterotrimers. Coenzyme F430 is required as a cofactor.

The catalysed reaction is coenzyme B + methyl-coenzyme M = methane + coenzyme M-coenzyme B heterodisulfide. It functions in the pathway one-carbon metabolism; methyl-coenzyme M reduction; methane from methyl-coenzyme M: step 1/1. Component of the methyl-coenzyme M reductase (MCR) I that catalyzes the reductive cleavage of methyl-coenzyme M (CoM-S-CH3 or 2-(methylthio)ethanesulfonate) using coenzyme B (CoB or 7-mercaptoheptanoylthreonine phosphate) as reductant which results in the production of methane and the mixed heterodisulfide of CoB and CoM (CoM-S-S-CoB). This is the final step in methanogenesis. The protein is Methyl-coenzyme M reductase II subunit gamma (mrtG) of Methanothermobacter marburgensis (strain ATCC BAA-927 / DSM 2133 / JCM 14651 / NBRC 100331 / OCM 82 / Marburg) (Methanobacterium thermoautotrophicum).